The chain runs to 641 residues: MTTPALLPLSGRRIPPLNLGPPSFPHHRATLRLSEKFILLLILSAFITLCFGAFFFLPDSSKHKRFDLGLEDVLIPHVDAGKGAKNPGVFLIHGPDEHRHREEEERLRNKIRADHEKALEEAKEKLRKSREEIRAEIQTEKNKVVQEMKIKENKPLPPVPIPNLVGIRGGDPEDNDIREKREKIKEMMKHAWDNYRTYGWGHNELRPIARKGHSPNIFGSSQMGATIVDALDTLYIMGLHDEFLDGQRWIEDNLDFSVNSEVSVFEVNIRFIGGLLAAYYLSGEEIFKIKAVQLAEKLLPAFNTPTGIPWAMVNLKSGVGRNWGWASAGSSILAEFGTLHMEFIHLSYLTGDLTYYKKVMHIRKLLQKMDRPNGLYPNYLNPRTGRWGQYHTSVGGLGDSFYEYLLKAWLMSDKTDHEARKMYDDAIEAIEKHLIKKSRGGLTFIGEWKNGHLEKKMGHLACFAGGMFALGADGSRADKAGHYLELGAEIARTCHESYDRTALKLGPESFKFDGAVEAVAVRQAEKYYILRPEVIETYWYLWRFTHDPRYRQWGWEAALAIEKYCRVNGGFSGVKDVYSSTPTHDDVQQSFFLAETLKYLYLLFSGDDLLPLDHWVFNTEAHPLPVLHLANTTLSGNPAVR.

Residue Thr2 is modified to N-acetylthreonine. At 2-36 (TTPALLPLSGRRIPPLNLGPPSFPHHRATLRLSEK) the chain is on the cytoplasmic side. A helical; Signal-anchor for type II membrane protein membrane pass occupies residues 37-57 (FILLLILSAFITLCFGAFFFL). The Lumenal segment spans residues 58-641 (PDSSKHKRFD…TTLSGNPAVR (584 aa)). Positions 153-175 (NKPLPPVPIPNLVGIRGGDPEDN) are disordered. Cysteines 462 and 494 form a disulfide. Glu508 functions as the Proton donor in the catalytic mechanism. Thr619 is a Ca(2+) binding site. N-linked (GlcNAc...) asparagine glycosylation is present at Asn631.

Belongs to the glycosyl hydrolase 47 family. Ca(2+) is required as a cofactor. Highest levels of expression in placenta and testis.

The protein resides in the golgi apparatus membrane. It carries out the reaction N(4)-(alpha-D-Man-(1-&gt;2)-alpha-D-Man-(1-&gt;2)-alpha-D-Man-(1-&gt;3)-[alpha-D-Man-(1-&gt;2)-alpha-D-Man-(1-&gt;3)-[alpha-D-Man-(1-&gt;2)-alpha-D-Man-(1-&gt;6)]-alpha-D-Man-(1-&gt;6)]-beta-D-Man-(1-&gt;4)-beta-D-GlcNAc-(1-&gt;4)-beta-D-GlcNAc)-L-asparaginyl-[protein] (N-glucan mannose isomer 9A1,2,3B1,2,3) + 4 H2O = N(4)-(alpha-D-Man-(1-&gt;3)-[alpha-D-Man-(1-&gt;3)-[alpha-D-Man-(1-&gt;6)]-alpha-D-Man-(1-&gt;6)]-beta-D-Man-(1-&gt;4)-beta-D-GlcNAc-(1-&gt;4)-beta-D-GlcNAc)-L-asparaginyl-[protein] (N-glucan mannose isomer 5A1,2) + 4 beta-D-mannose. It catalyses the reaction N(4)-(alpha-D-Man-(1-&gt;2)-alpha-D-Man-(1-&gt;2)-alpha-D-Man-(1-&gt;3)-[alpha-D-Man-(1-&gt;3)-[alpha-D-Man-(1-&gt;2)-alpha-D-Man-(1-&gt;6)]-alpha-D-Man-(1-&gt;6)]-beta-D-Man-(1-&gt;4)-beta-D-GlcNAc-(1-&gt;4)-beta-D-GlcNAc)-L-asparaginyl-[protein] (N-glucan mannose isomer 8A1,2,3B1,3) + 3 H2O = N(4)-(alpha-D-Man-(1-&gt;3)-[alpha-D-Man-(1-&gt;3)-[alpha-D-Man-(1-&gt;6)]-alpha-D-Man-(1-&gt;6)]-beta-D-Man-(1-&gt;4)-beta-D-GlcNAc-(1-&gt;4)-beta-D-GlcNAc)-L-asparaginyl-[protein] (N-glucan mannose isomer 5A1,2) + 3 beta-D-mannose. Its pathway is protein modification; protein glycosylation. With respect to regulation, inhibited by both 1-deoxymannojirimycin and kifunensine. In terms of biological role, involved in the maturation of Asn-linked oligosaccharides. Progressively trim alpha-1,2-linked mannose residues from Man(9)GlcNAc(2) to produce Man(5)GlcNAc(2). This chain is Mannosyl-oligosaccharide 1,2-alpha-mannosidase IB (MAN1A2), found in Homo sapiens (Human).